Here is a 499-residue protein sequence, read N- to C-terminus: 6-hydroxynicotinate reductase (499 aa).

4Fe-4S ferredoxin-type domains lie at 1–29 (MFKI…YEKK) and 31–61 (KGAI…NDAP). The [4Fe-4S] cluster site is built by C9, C12, C15, C19, C41, C44, C47, and C51.

In terms of assembly, homotetramer. The cofactor is an oxidized flavin. Requires [2Fe-2S] cluster as cofactor. [4Fe-4S] cluster is required as a cofactor.

The catalysed reaction is 1,4,5,6-tetrahydro-6-oxonicotinate + oxidized 2[4Fe-4S]-[ferredoxin] = 6-hydroxynicotinate + reduced 2[4Fe-4S]-[ferredoxin] + 2 H(+). It functions in the pathway cofactor degradation; nicotinate degradation; propanoate and pyruvate from 6-hydroxynicotinate: step 1/8. In terms of biological role, catalyzes the reversible reduction of 6-hydroxynicotinate to 6-oxo-1,4,5,6-tetrahydronicotinate. This chain is 6-hydroxynicotinate reductase, found in Eubacterium barkeri (Clostridium barkeri).